A 416-amino-acid chain; its full sequence is 1-deoxy-D-xylulose 5-phosphate reductoisomerase (416 aa).

NADPH contacts are provided by T10, G11, S12, I13, G36, R37, N38, and N130. Residue K131 participates in 1-deoxy-D-xylulose 5-phosphate binding. An NADPH-binding site is contributed by E132. D156 serves as a coordination point for Mn(2+). Residues S157, E158, S194, and H217 each contribute to the 1-deoxy-D-xylulose 5-phosphate site. Residue E158 participates in Mn(2+) binding. G223 contacts NADPH. Residues S230, N235, K236, and E239 each coordinate 1-deoxy-D-xylulose 5-phosphate. E239 lines the Mn(2+) pocket.

Belongs to the DXR family. It depends on Mg(2+) as a cofactor. The cofactor is Mn(2+).

It catalyses the reaction 2-C-methyl-D-erythritol 4-phosphate + NADP(+) = 1-deoxy-D-xylulose 5-phosphate + NADPH + H(+). Its pathway is isoprenoid biosynthesis; isopentenyl diphosphate biosynthesis via DXP pathway; isopentenyl diphosphate from 1-deoxy-D-xylulose 5-phosphate: step 1/6. Its function is as follows. Catalyzes the NADPH-dependent rearrangement and reduction of 1-deoxy-D-xylulose-5-phosphate (DXP) to 2-C-methyl-D-erythritol 4-phosphate (MEP). This chain is 1-deoxy-D-xylulose 5-phosphate reductoisomerase, found in Synechococcus sp. (strain CC9311).